A 315-amino-acid chain; its full sequence is Probable cytochrome c oxidase subunit 2 (315 aa).

Helical transmembrane passes span 54–74 (IALI…PLPW), 96–116 (LLYI…FVCI), and 133–153 (VLIE…IAVP). Positions 235, 270, 274, and 278 each coordinate Cu cation.

It belongs to the cytochrome c oxidase subunit 2 family. Cu cation is required as a cofactor. The cofactor is heme.

It localises to the cell membrane. The catalysed reaction is 4 Fe(II)-[cytochrome c] + O2 + 8 H(+)(in) = 4 Fe(III)-[cytochrome c] + 2 H2O + 4 H(+)(out). Subunits I and II form the functional core of the enzyme complex. Electrons originating in cytochrome c are transferred via heme a and Cu(A) to the binuclear center formed by heme a3 and Cu(B). The protein is Probable cytochrome c oxidase subunit 2 (ctaC) of Rickettsia conorii (strain ATCC VR-613 / Malish 7).